The sequence spans 338 residues: Fe(3+)-binding periplasmic protein (338 aa).

Positions 1 to 26 are cleaved as a signal peptide; it reads MKLRISSLGPVALLASSMMLAFGAQA. Fe cation is bound by residues H40, E88, Y224, and Y225.

The protein belongs to the bacterial solute-binding protein 1 family. The complex is composed of two ATP-binding proteins (FbpC), two transmembrane proteins (FbpB) and a solute-binding protein (FbpA).

The protein localises to the periplasm. Part of the ABC transporter complex FbpABC (TC 3.A.1.10.1) involved in Fe(3+) ions import. This protein specifically binds Fe(3+) and is involved in its transmembrane transport. The protein is Fe(3+)-binding periplasmic protein (fbpA) of Serratia marcescens.